A 342-amino-acid chain; its full sequence is MDANKEKALQAALQQIDRQFGKGTVMRMGDKELEAIPAVSTGSLGLDVALGIGGLPKGRIVEIYGPESSGKTTLTLQVIAEAQRKGGTCAFVDAEHALDPIYAAKLGVNVDDLIVSQPDTGEQALEVADMLVRSGAIDVLVVDSVAALTPKAEIEGEMGDHHVGLQARLMSQALRKITGNIKNANCLAIFINQIRMKIGVMFGNPETTTGGNALKFYSSVRLDIRRIGSVKDGDEVIGSETRVKVVKNKVAPPFKQTEFQILYGTGINRLGEVIDYGVKLGLIDKAGAWYSYNGDKIGQGKNNAIQYLREHSDVAQTLEDRLKAELLGQSFDEAVEAEAESE.

Glycine 65–threonine 72 lines the ATP pocket.

It belongs to the RecA family.

It localises to the cytoplasm. Can catalyze the hydrolysis of ATP in the presence of single-stranded DNA, the ATP-dependent uptake of single-stranded DNA by duplex DNA, and the ATP-dependent hybridization of homologous single-stranded DNAs. It interacts with LexA causing its activation and leading to its autocatalytic cleavage. The polypeptide is Protein RecA (Teredinibacter turnerae (strain ATCC 39867 / T7901)).